The following is a 205-amino-acid chain: MTSGIMIASNVLLWGAFLALAALMLGVIRQIGLLHERSAPLGAMMIDHGPDIGERSPVFSMTTIDGVPVTVGRAVSPGRPSLLMFTGPSCPICQKLLPIIRSVAATEGADVILISDGTQAEHREFLRNHPLDGEHYVVSAEIGMRYQVSKVPYGVLLDKDGVIQAKGLCNTREHVESLFETTRVGHSTLQNFLKHGVEDASKHVH.

The chain crosses the membrane as a helical span at residues 5 to 25 (IMIASNVLLWGAFLALAALML). A Thioredoxin domain is found at 50 to 184 (PDIGERSPVF…VESLFETTRV (135 aa)).

It is found in the membrane. It functions in the pathway one-carbon metabolism; methylamine degradation. In terms of biological role, may be specifically involved in the processing, transport, and/or maturation of the MADH beta-subunit. The protein is Methylamine utilization protein MauD (mauD) of Methylobacillus flagellatus (strain ATCC 51484 / DSM 6875 / VKM B-1610 / KT).